The chain runs to 74 residues: ATP synthase subunit c (74 aa).

Transmembrane regions (helical) follow at residues 8 to 28 (FIGV…VSNI) and 52 to 72 (IGAG…MLLI).

Belongs to the ATPase C chain family. In terms of assembly, F-type ATPases have 2 components, F(1) - the catalytic core - and F(0) - the membrane proton channel. F(1) has five subunits: alpha(3), beta(3), gamma(1), delta(1), epsilon(1). F(0) has three main subunits: a(1), b(2) and c(10-14). The alpha and beta chains form an alternating ring which encloses part of the gamma chain. F(1) is attached to F(0) by a central stalk formed by the gamma and epsilon chains, while a peripheral stalk is formed by the delta and b chains.

The protein localises to the cell inner membrane. Functionally, f(1)F(0) ATP synthase produces ATP from ADP in the presence of a proton or sodium gradient. F-type ATPases consist of two structural domains, F(1) containing the extramembraneous catalytic core and F(0) containing the membrane proton channel, linked together by a central stalk and a peripheral stalk. During catalysis, ATP synthesis in the catalytic domain of F(1) is coupled via a rotary mechanism of the central stalk subunits to proton translocation. Key component of the F(0) channel; it plays a direct role in translocation across the membrane. A homomeric c-ring of between 10-14 subunits forms the central stalk rotor element with the F(1) delta and epsilon subunits. The polypeptide is ATP synthase subunit c (Rickettsia bellii (strain RML369-C)).